Reading from the N-terminus, the 50-residue chain is Large ribosomal subunit protein bL33 (50 aa).

It belongs to the bacterial ribosomal protein bL33 family.

This is Large ribosomal subunit protein bL33 from Hydrogenovibrio crunogenus (strain DSM 25203 / XCL-2) (Thiomicrospira crunogena).